A 577-amino-acid polypeptide reads, in one-letter code: Hemagglutinin-neuraminidase (577 aa).

Residues 1–26 (MDRAVSQVALENDEREAKNTWRLIFR) are Intravirion-facing. Residues 27-47 (IAILLLTVVTLATSVASLVYS) form a helical membrane-spanning segment. Residues 48 to 577 (MGASTPSDLV…NDGVREARSG (530 aa)) are Virion surface-facing. N-linked (GlcNAc...) asparagine; by host glycosylation occurs at N119. Residues 124–152 (GAPIHDPDFIGGIGKELIVDDASDVTSFY) form an important for interaction with fusion/F protein region. 3 disulfide bridges follow: C172/C196, C186/C247, and C238/C251. An involved in neuraminidase activity region spans residues 234-239 (NRKSCS). N-linked (GlcNAc...) asparagine; by host glycans are attached at residues N341 and N433. 2 disulfide bridges follow: C344-C461 and C455-C465. 2 N-linked (GlcNAc...) asparagine; by host glycosylation sites follow: N481 and N538. A disulfide bridge connects residues C531 and C542.

Belongs to the paramyxoviruses hemagglutinin-neuraminidase family. In terms of assembly, homotetramer; composed of disulfide-linked homodimers. Interacts with F protein trimer. Interacts with host CG-1B; this interaction inhibits viral adsorption and replication rather than internalization.

It is found in the virion membrane. The protein resides in the host cell membrane. It catalyses the reaction Hydrolysis of alpha-(2-&gt;3)-, alpha-(2-&gt;6)-, alpha-(2-&gt;8)- glycosidic linkages of terminal sialic acid residues in oligosaccharides, glycoproteins, glycolipids, colominic acid and synthetic substrates.. Mediates the viral entry into the host cell together with fusion/F protein. Attaches the virus to sialic acid-containing cell receptors and thereby initiates infection. Binding of HN protein to the receptor induces a conformational change that allows the F protein to trigger virion/cell membranes fusion. Functionally, neuraminidase activity ensures the efficient spread of the virus by dissociating the mature virions from the neuraminic acid containing glycoproteins. This is Hemagglutinin-neuraminidase (HN) from Gallus gallus (Chicken).